Reading from the N-terminus, the 190-residue chain is GTP cyclohydrolase 1 (190 aa).

Positions 75, 78, and 146 each coordinate Zn(2+).

It belongs to the GTP cyclohydrolase I family. As to quaternary structure, homomer.

It catalyses the reaction GTP + H2O = 7,8-dihydroneopterin 3'-triphosphate + formate + H(+). It functions in the pathway cofactor biosynthesis; 7,8-dihydroneopterin triphosphate biosynthesis; 7,8-dihydroneopterin triphosphate from GTP: step 1/1. The protein is GTP cyclohydrolase 1 of Campylobacter jejuni subsp. jejuni serotype O:6 (strain 81116 / NCTC 11828).